We begin with the raw amino-acid sequence, 336 residues long: Probable allantoicase (336 aa).

Belongs to the allantoicase family.

The enzyme catalyses allantoate + H2O = (S)-ureidoglycolate + urea. The protein operates within nitrogen metabolism; (S)-allantoin degradation; (S)-ureidoglycolate from allantoate (aminidohydrolase route): step 1/1. In Acinetobacter baumannii (strain AYE), this protein is Probable allantoicase.